The sequence spans 69 residues: U5-agatoxin-Ao1a (69 aa).

The N-terminal stretch at 1 to 20 is a signal peptide; it reads MRTIISLLLLSAMVFAVIEA. Positions 21–34 are excised as a propeptide; it reads ISLEEGLQLFEGER. Intrachain disulfides connect Cys36–Cys52 and Cys43–Cys57.

The protein belongs to the neurotoxin 01 (U2-agtx) family. Post-translationally, does not contain a cysteine at position 61 which disrupts the cysteine framework. In terms of tissue distribution, expressed by the venom gland.

It localises to the secreted. This chain is U5-agatoxin-Ao1a, found in Agelena orientalis (Funnel-web spider).